We begin with the raw amino-acid sequence, 215 residues long: Protein C' (215 aa).

Residues 12–34 (MPSFLKKILKLRGRRQEDESRSR) are disordered. The segment at 15 to 22 (FLKKILKL) is involved in self-degradation and in host STAT1 degradation.

Belongs to the respirovirus protein C family. The different isoforms interact (via C-terminus) with unphosphorylated and phosphorylated human STAT1 (via N-terminus), favoring the formation of parallel STAT1 homodimers. The different isoforms do not interact with host STAT2. C protein interacts with L protein; this interaction has an inhibitory effect on viral transcription and replication. Post-translationally, Y1 and Y2 proteins are produced not only by alternative initiation, but also by proteolytic cleavage of C'. Only alternative initiation is detected in vitro, whereas in vivo cleavage seems to be predominant.

It localises to the host cytoplasm. The different products prevent the establishment of cellular antiviral state by blocking the interferon-alpha/beta (IFN-alpha/beta) and IFN-gamma signaling pathways. They inhibit IFN-alpha/beta induced tyrosine phosphorylation of STAT1 and STAT2. Blocking the IFN-alpha/beta pathway requires binding to STAT1 in the cytoplasm. They inhibit IFN-gamma induced serine phosphorylation of STAT1. Block the IFN-gamma pathway by binding to and stabilizing the parallel form of the STAT1 dimer, further inducing high-molecular-weight complex formation and inhibition of transcription by IFN-gamma. May also have a role in preventing the cell to enter apoptosis. Modulate regulation of viral transcription and replication. Overexpression inhibits the viral RNA polymerase. The absence of all C', C, Y1 and Y2 proteins leads to viral delayed growth. Plays an important role in virion particles release. Modulates virion shape. The chain is Protein C' (P/V/C) from Sendai virus (strain Nagoya) (SeV).